We begin with the raw amino-acid sequence, 141 residues long: Nucleoside triphosphatase NudI (141 aa).

Residues 1 to 141 enclose the Nudix hydrolase domain; sequence MRQRTIVCPL…RKTLSLKGLL (141 aa). Positions 38–59 match the Nudix box motif; it reads GGVEPGERIEDALRREIREELG.

This sequence belongs to the Nudix hydrolase family. NudI subfamily. In terms of assembly, monomer. The cofactor is Mg(2+).

The enzyme catalyses a ribonucleoside 5'-triphosphate + H2O = a ribonucleoside 5'-phosphate + diphosphate + H(+). The catalysed reaction is a 2'-deoxyribonucleoside 5'-triphosphate + H2O = a 2'-deoxyribonucleoside 5'-phosphate + diphosphate + H(+). It catalyses the reaction dUTP + H2O = dUMP + diphosphate + H(+). It carries out the reaction dTTP + H2O = dTMP + diphosphate + H(+). The enzyme catalyses dCTP + H2O = dCMP + diphosphate + H(+). Functionally, catalyzes the hydrolysis of nucleoside triphosphates, with a preference for pyrimidine deoxynucleoside triphosphates (dUTP, dTTP and dCTP). The sequence is that of Nucleoside triphosphatase NudI from Escherichia fergusonii (strain ATCC 35469 / DSM 13698 / CCUG 18766 / IAM 14443 / JCM 21226 / LMG 7866 / NBRC 102419 / NCTC 12128 / CDC 0568-73).